The primary structure comprises 311 residues: Aspartate carbamoyltransferase catalytic subunit (311 aa).

2 residues coordinate carbamoyl phosphate: arginine 55 and threonine 56. Lysine 84 serves as a coordination point for L-aspartate. Residues arginine 105, histidine 133, and glutamine 136 each contribute to the carbamoyl phosphate site. Residues arginine 166 and arginine 229 each coordinate L-aspartate. Residues leucine 268 and proline 269 each coordinate carbamoyl phosphate.

The protein belongs to the aspartate/ornithine carbamoyltransferase superfamily. ATCase family. In terms of assembly, heterododecamer (2C3:3R2) of six catalytic PyrB chains organized as two trimers (C3), and six regulatory PyrI chains organized as three dimers (R2).

The catalysed reaction is carbamoyl phosphate + L-aspartate = N-carbamoyl-L-aspartate + phosphate + H(+). It participates in pyrimidine metabolism; UMP biosynthesis via de novo pathway; (S)-dihydroorotate from bicarbonate: step 2/3. Catalyzes the condensation of carbamoyl phosphate and aspartate to form carbamoyl aspartate and inorganic phosphate, the committed step in the de novo pyrimidine nucleotide biosynthesis pathway. The protein is Aspartate carbamoyltransferase catalytic subunit of Alkaliphilus metalliredigens (strain QYMF).